The primary structure comprises 451 residues: Cobalamin reductase PduS (451 aa).

4Fe-4S ferredoxin-type domains follow at residues 255–284 and 300–330; these read TVLSVARTVCEQCRLCTDLCPRHLIGHELS and PQLLLSALTCSECNVCESVACPVGISPMRIN. Residues C264, C267, C270, C274, C309, C312, C315, and C320 each contribute to the [4Fe-4S] cluster site.

Belongs to the PduS cobalamin reductase family. In terms of assembly, monomeric when purified anaerobically, dimeric under aerobic conditions. Forms a complex with PduO. Interacts with PduT, probably via the N-terminus of PduS. The cofactor is [4Fe-4S] cluster. FMN is required as a cofactor.

Its subcellular location is the bacterial microcompartment. Its pathway is polyol metabolism; 1,2-propanediol degradation. Functionally, a protein that aids in conversion of cob(III)alamin to cob(II)alamin and then to cob(I)alamin in the bacterial microcompartment (BMC) dedicated to 1,2-propanediol (1,2-PD) degradation. The latter step requires PduO. No free cob(I)alamin is released, suggesting a complex is formed with PduO that finishes conversion to adenosylcobalamin. PduS and PduO allow regeneration of the adenosylcobalamin cofactor within the BMC. Another study showed reduction of cob(II)alamin to cob(I)alamin in the absence of PduO. Both reactions require NADH. Cyanocobalamin (CN-Cbl) is not a substrate for the first reaction. Cobalamin reduction probably occurs spontaneously in the presence of free reduced flavin nucleotides, this protein may be involved in electron transfer for this reduction. Its function is as follows. The 1,2-PD-specific bacterial microcompartment (BMC) concentrates low levels of 1,2-PD catabolic enzymes, concentrates volatile reaction intermediates thus enhancing pathway flux and keeps the level of toxic, mutagenic propionaldehyde low. The protein is Cobalamin reductase PduS of Salmonella typhimurium (strain LT2 / SGSC1412 / ATCC 700720).